Consider the following 487-residue polypeptide: Cytochrome c-552 (487 aa).

The first 27 residues, 1-27, serve as a signal peptide directing secretion; the sequence is MSKKWTRNTAAMAAILSALCLSTNALA. His104 lines the heme c pocket. Heme contacts are provided by Cys132, Cys135, and Lys136. The heme c site is built by Cys170, Cys173, His174, Cys219, Cys222, and His223. Ca(2+)-binding residues include Glu225, Tyr226, Lys271, and Gln273. Tyr226 serves as a coordination point for substrate. A substrate-binding site is contributed by His274. Residues His285, Cys292, Cys295, His296, His311, Cys324, Cys327, His328, and His403 each coordinate heme c.

The protein belongs to the cytochrome c-552 family. Ca(2+) is required as a cofactor. It depends on heme c as a cofactor.

It localises to the periplasm. It carries out the reaction 6 Fe(III)-[cytochrome c] + NH4(+) + 2 H2O = 6 Fe(II)-[cytochrome c] + nitrite + 8 H(+). It functions in the pathway nitrogen metabolism; nitrate reduction (assimilation). Catalyzes the reduction of nitrite to ammonia, consuming six electrons in the process. The sequence is that of Cytochrome c-552 from Photobacterium profundum (strain SS9).